The chain runs to 84 residues: Large ribosomal subunit protein bL27 (84 aa).

Residues 1–22 are disordered; the sequence is MAHKKGASSTRNGRDSNAQRLG. Polar residues predominate over residues 7 to 19; that stretch reads ASSTRNGRDSNAQ.

This sequence belongs to the bacterial ribosomal protein bL27 family.

In Streptomyces avermitilis (strain ATCC 31267 / DSM 46492 / JCM 5070 / NBRC 14893 / NCIMB 12804 / NRRL 8165 / MA-4680), this protein is Large ribosomal subunit protein bL27.